We begin with the raw amino-acid sequence, 401 residues long: 26S proteasome regulatory subunit 6A (401 aa).

189–196 (GPPGTGKT) contacts ATP.

This sequence belongs to the AAA ATPase family. As to quaternary structure, the 26S proteasome consists of a 20S proteasome core and two 19S regulatory subunits. The 20S proteasome core is composed of 28 subunits that are arranged in four stacked rings, resulting in a barrel-shaped structure. The two end rings are each formed by seven alpha subunits, and the two central rings are each formed by seven beta subunits. The catalytic chamber with the active sites is on the inside of the barrel.

It is found in the cytoplasm. Its subcellular location is the nucleus. Acts as a regulatory subunit of the 26S proteasome which degrades poly-ubiquitinated proteins in the cytoplasm and in the nucleus. It is essential for the regulated turnover of proteins and for the removal of misfolded proteins. The proteasome is a multicatalytic proteinase complex that is characterized by its ability to cleave peptides with Arg, Phe, Tyr, Leu, and Glu adjacent to the leaving group at neutral or slightly basic pH. This Encephalitozoon cuniculi (strain GB-M1) (Microsporidian parasite) protein is 26S proteasome regulatory subunit 6A (RPT5).